A 515-amino-acid polypeptide reads, in one-letter code: Cyclic AMP receptor-like protein G (515 aa).

Residues 1-16 (MSSIIFIPNDADNINS) lie on the Extracellular side of the membrane. The helical transmembrane segment at 17 to 37 (IMVTISSSLSLVGCLFILSIY) threads the bilayer. Topologically, residues 38–50 (IYYKELREFQLKL) are cytoplasmic. The helical transmembrane segment at 51–71 (IFIMTINDFIISIIFLIATHI) threads the bilayer. Over 72 to 92 (QTKYFDAITNVFPFFCNFPDS) the chain is Extracellular. Residues 93 to 113 (LLHYFFLSSFFWEVCIAHTLI) traverse the membrane as a helical segment. The Cytoplasmic segment spans residues 114-129 (QVIKYNNDKVEDNLKK). Residues 130–150 (YFIFSNGLSALIMVSLFFIRS) form a helical membrane-spanning segment. Topologically, residues 151–164 (YSKIDCHHDSIFPH) are extracellular. A helical membrane pass occupies residues 165–185 (LLFFIPLLLTWIYNIIVCALL). At 186–276 (TKTFKEQAMN…IRKTPNIIWT (91 aa)) the chain is on the cytoplasmic side. Residues 277–297 (SIFFLFSFGFIWSWSILVIIL) traverse the membrane as a helical segment. Topologically, residues 298–306 (KYLSLDVKY) are extracellular. Residues 307–327 (ILMISYFFIPLHGCMNAVCFG) traverse the membrane as a helical segment. Topologically, residues 328–515 (VNDRLRMNLK…FCTIDEDETK (188 aa)) are cytoplasmic. The segment covering 362–375 (NGNNKNNKNNNGAN) has biased composition (low complexity). 2 disordered regions span residues 362–409 (NGNN…YYQI) and 469–515 (NNNN…DETK). Over residues 385 to 396 (SPDDDDDEDDDN) the composition is skewed to acidic residues. 2 stretches are compositionally biased toward low complexity: residues 397–407 (NNNNYSDGNYY) and 469–504 (NNNNNNNNNNNNNNNNNNNNNNINNNDNNNNNNNNN).

It belongs to the G-protein coupled receptor 5 family.

Its subcellular location is the membrane. Receptor for cAMP. The sequence is that of Cyclic AMP receptor-like protein G (crlG) from Dictyostelium discoideum (Social amoeba).